The following is a 78-amino-acid chain: Large ribosomal subunit protein bL28 (78 aa).

Residues 1-25 are disordered; the sequence is MSRVCQVTGKRPAVGNNRSHARNAT.

It belongs to the bacterial ribosomal protein bL28 family.

This chain is Large ribosomal subunit protein bL28, found in Vibrio vulnificus (strain CMCP6).